The following is a 144-amino-acid chain: Large ribosomal subunit protein uL15 (144 aa).

The interval 1–57 is disordered; sequence MRFNELQPAKGSRFAGKRLGRGIGSGLGKTSGKGHKGQKARSGGYHKVGFEGGQMPL. Gly residues predominate over residues 21–31; the sequence is RGIGSGLGKTS.

This sequence belongs to the universal ribosomal protein uL15 family. In terms of assembly, part of the 50S ribosomal subunit.

In terms of biological role, binds to the 23S rRNA. In Dichelobacter nodosus (strain VCS1703A), this protein is Large ribosomal subunit protein uL15.